Reading from the N-terminus, the 156-residue chain is MSDENNQPFFNIQRIYLKDMSLEQPNSPAIFLEQEMPSVEVEVDVKAERLADTVFEILVTGTVTAKVSDKVAFLIEAKQAGIFDIRNIPAEQIDPLVGIACPTILFPYLRSNIADAITRAGFPPIHLAEINFQALYEQRLAQIATQETGAGSAAHH.

Belongs to the SecB family. In terms of assembly, homotetramer, a dimer of dimers. One homotetramer interacts with 1 SecA dimer.

The protein resides in the cytoplasm. One of the proteins required for the normal export of preproteins out of the cell cytoplasm. It is a molecular chaperone that binds to a subset of precursor proteins, maintaining them in a translocation-competent state. It also specifically binds to its receptor SecA. This chain is Protein-export protein SecB, found in Paraburkholderia phymatum (strain DSM 17167 / CIP 108236 / LMG 21445 / STM815) (Burkholderia phymatum).